Here is a 333-residue protein sequence, read N- to C-terminus: Glycerol-3-phosphate dehydrogenase [NAD(P)+] (333 aa).

The NADPH site is built by Ser-13, Tyr-14, Arg-34, and Lys-108. Sn-glycerol 3-phosphate-binding residues include Lys-108, Gly-137, and Thr-139. Ala-141 serves as a coordination point for NADPH. Sn-glycerol 3-phosphate-binding residues include Lys-193, Asp-246, Ser-256, Arg-257, and Asn-258. Lys-193 serves as the catalytic Proton acceptor. Arg-257 lines the NADPH pocket. NADPH is bound at residue Glu-283.

Belongs to the NAD-dependent glycerol-3-phosphate dehydrogenase family.

The protein resides in the cytoplasm. It carries out the reaction sn-glycerol 3-phosphate + NAD(+) = dihydroxyacetone phosphate + NADH + H(+). The catalysed reaction is sn-glycerol 3-phosphate + NADP(+) = dihydroxyacetone phosphate + NADPH + H(+). Its pathway is membrane lipid metabolism; glycerophospholipid metabolism. Its function is as follows. Catalyzes the reduction of the glycolytic intermediate dihydroxyacetone phosphate (DHAP) to sn-glycerol 3-phosphate (G3P), the key precursor for phospholipid synthesis. In Idiomarina loihiensis (strain ATCC BAA-735 / DSM 15497 / L2-TR), this protein is Glycerol-3-phosphate dehydrogenase [NAD(P)+].